Here is a 333-residue protein sequence, read N- to C-terminus: Putative transporter MamV (333 aa).

Transmembrane regions (helical) follow at residues 19–39, 86–106, 111–131, 170–190, and 191–211; these read AWLD…LGVL, FLSA…MLWY, LGSG…LISA, VLAG…LAAI, and LVSL…IHGL.

The protein belongs to the cation diffusion facilitator (CDF) transporter (TC 2.A.4) family.

It localises to the cell inner membrane. Functionally, expression of just the minimal mamAB gene cluster (amb0961 to amb0978), including this gene, is sufficient to form a minimal magnetosome chain with small magnetite particles. The polypeptide is Putative transporter MamV (Paramagnetospirillum magneticum (strain ATCC 700264 / AMB-1) (Magnetospirillum magneticum)).